The chain runs to 205 residues: LexA repressor (205 aa).

A DNA-binding region (H-T-H motif) is located at residues 28 to 48; it reads VREIGEAVGLASSSTVHGHLA. Residues serine 127 and lysine 165 each act as for autocatalytic cleavage activity in the active site.

This sequence belongs to the peptidase S24 family. As to quaternary structure, homodimer. Post-translationally, following treatment with mitomycin C protein levels begin to decrease after a 5-min lag and do not return to their original levels for at least 90 minutes.

The enzyme catalyses Hydrolysis of Ala-|-Gly bond in repressor LexA.. Its function is as follows. Represses dinA, dinB, dinC, recA genes and itself by binding to the 14 bp palindromic sequence 5'-CGAACNNNNGTTCG-3'; some genes have a tandem consensus sequence and their binding is cooperative. In the presence of single-stranded DNA, RecA interacts with LexA causing an autocatalytic cleavage which disrupts the DNA-binding part of LexA, leading to derepression of the SOS regulon and eventually DNA repair; autocleavage is maximal at pH 11 in the absence of RecA and ssDNA. In Bacillus subtilis (strain 168), this protein is LexA repressor.